The chain runs to 494 residues: 5'-3' exonuclease PLD3 (494 aa).

The Cytoplasmic portion of the chain corresponds to 1–37 (MNPKVEYKQIQSHDEAENQVLQHECHQAKARKYYRCA). A helical; Signal-anchor for type II membrane protein transmembrane segment spans residues 38–58 (VVIAIIITLLFCVLASQLLLF). Residues 59 to 494 (PLFSITSQTT…LSSWKEKCIF (436 aa)) are Lumenal-facing. An N-linked (GlcNAc...) asparagine glycan is attached at asparagine 100. Residues 198 to 225 (TDGVLHTKFWVVDSEHFYIGSANMDWRS) enclose the PLD phosphodiesterase 1 domain. Residues histidine 203, lysine 205, and aspartate 210 contribute to the active site. N-linked (GlcNAc...) asparagine glycosylation is found at asparagine 238, asparagine 260, asparagine 270, asparagine 286, and asparagine 389. A PLD phosphodiesterase 2 domain is found at 413-439 (YARVNHNKYMVTDRVAYIGTSNWSGDY). Catalysis depends on residues histidine 418, lysine 420, and aspartate 425. N-linked (GlcNAc...) asparagine glycosylation is found at asparagine 434, asparagine 451, and asparagine 477.

This sequence belongs to the phospholipase D family. N-glycosylated. Post-translationally, proteolytically processed to a soluble form that is stable within endosomes and lysosomes. During transport through the secretory pathway becomes proteolysed by cysteine proteases, thereby releasing a stable soluble lysosomal lumenal polypeptide, whereas the transmembrane-bound fragment is rapidly degraded. Its transport route to lysosomes involves ubiquitination and the ESCRT complex. In terms of processing, ubiquitinated. Ubiquitination mediates sorting into lysosomes.

The protein localises to the endoplasmic reticulum membrane. It localises to the lysosome lumen. Its subcellular location is the early endosome membrane. The protein resides in the late endosome membrane. It is found in the golgi apparatus membrane. The protein localises to the endosome membrane. The catalysed reaction is Exonucleolytic cleavage in the 5'- to 3'-direction to yield nucleoside 3'-phosphates.. Functionally, 5'-&gt;3' DNA exonuclease which digests single-stranded DNA (ssDNA). Regulates inflammatory cytokine responses via the degradation of nucleic acids, by reducing the concentration of ssDNA able to stimulate TLR9, a nucleotide-sensing receptor in collaboration with PLD4. May be important in myotube formation. Plays a role in lysosomal homeostasis. Involved in the regulation of endosomal protein sorting. The polypeptide is 5'-3' exonuclease PLD3 (pld3) (Xenopus tropicalis (Western clawed frog)).